The chain runs to 393 residues: Acetylornithine aminotransferase 1 (393 aa).

Position 131 (R131) interacts with N(2)-acetyl-L-ornithine. Pyridoxal 5'-phosphate is bound at residue 215-218 (DEVQ). N6-(pyridoxal phosphate)lysine is present on K244. T272 serves as a coordination point for N(2)-acetyl-L-ornithine. Pyridoxal 5'-phosphate is bound at residue T273.

The protein belongs to the class-III pyridoxal-phosphate-dependent aminotransferase family. ArgD subfamily. In terms of assembly, homodimer. Requires pyridoxal 5'-phosphate as cofactor.

The protein localises to the cytoplasm. The catalysed reaction is N(2)-acetyl-L-ornithine + 2-oxoglutarate = N-acetyl-L-glutamate 5-semialdehyde + L-glutamate. The protein operates within amino-acid biosynthesis; L-arginine biosynthesis; N(2)-acetyl-L-ornithine from L-glutamate: step 4/4. This Bordetella parapertussis (strain 12822 / ATCC BAA-587 / NCTC 13253) protein is Acetylornithine aminotransferase 1.